We begin with the raw amino-acid sequence, 483 residues long: Scarecrow-like protein 26 (483 aa).

One can recognise a GRAS domain in the interval 95–477 (KTDESKGLRL…RRLVSASFWA (383 aa)). A leucine repeat I (LRI) region spans residues 102 to 165 (LRLVHLLVAA…SKLLERDSVL (64 aa)). A VHIID region spans residues 184-251 (FELLQNMSPY…PSAQHLRITA (68 aa)). A VHIID motif is present at residues 215-219 (IHIVD). The leucine repeat II (LRII) stretch occupies residues 267–299 (ETGRRLTAFADSIGQPFSYQHCKLDTNAFSTSS). Residues 308–400 (VVINCMLHLP…RVFIGPWVAN (93 aa)) form a PFYRE region. The SAW stretch occupies residues 403-477 (TRITANDAEV…RRLVSASFWA (75 aa)).

This sequence belongs to the GRAS family. As to expression, expressed in seedlings, roots, leaves and flowers.

The protein localises to the nucleus. Its function is as follows. Probable transcription factor involved in plant development. The sequence is that of Scarecrow-like protein 26 (SCL26) from Arabidopsis thaliana (Mouse-ear cress).